We begin with the raw amino-acid sequence, 386 residues long: MEGVLAANWSAEAVNSSAAPPEAEGNRTAGPPQRNEALARVEVAVLCLILFLALSGNACVLLALRTTRHKHSRLFFFMKHLSIADLVVAVFQVLPQLLWDITFRFYGPDLLCRLVKYLQVVGMFASTYLLLLMSLDRCLAICQPLRALRRPADRLAVLATWLGCLVASAPQVHIFSLREVADGVFDCWAVFIQPWGPKAYITWITLAVYIVPVIVLAACYGLISFKIWQNLRLKTAAEAAEAIAGTEGAAAGSRGRAALARVSSVKLISKAKIRTVKMTFIIVLAFIVCWTPFFFVQMWSVWDADAPKEASAFIIAMLLASLNSCCNPWIYMLFTGHLFHELVQRFLCCSSSHLKTSRPGETSVSKKSNSSTFVLSQHSSSQKSCS.

Positions 1–31 (MEGVLAANWSAEAVNSSAAPPEAEGNRTAGP) are disordered. Topologically, residues 1–38 (MEGVLAANWSAEAVNSSAAPPEAEGNRTAGPPQRNEAL) are extracellular. N-linked (GlcNAc...) asparagine glycosylation is found at Asn8, Asn15, and Asn26. Residues 39–63 (ARVEVAVLCLILFLALSGNACVLLA) traverse the membrane as a helical segment. The Cytoplasmic portion of the chain corresponds to 64 to 74 (LRTTRHKHSRL). Residues 75 to 97 (FFFMKHLSIADLVVAVFQVLPQL) traverse the membrane as a helical segment. The Extracellular portion of the chain corresponds to 98–113 (LWDITFRFYGPDLLCR). Cys112 and Cys187 form a disulfide bridge. The chain crosses the membrane as a helical span at residues 114-135 (LVKYLQVVGMFASTYLLLLMSL). The Cytoplasmic segment spans residues 136–154 (DRCLAICQPLRALRRPADR). A helical membrane pass occupies residues 155–175 (LAVLATWLGCLVASAPQVHIF). Over 176–202 (SLREVADGVFDCWAVFIQPWGPKAYIT) the chain is Extracellular. A helical membrane pass occupies residues 203 to 225 (WITLAVYIVPVIVLAACYGLISF). Residues 226–277 (KIWQNLRLKTAAEAAEAIAGTEGAAAGSRGRAALARVSSVKLISKAKIRTVK) lie on the Cytoplasmic side of the membrane. A helical transmembrane segment spans residues 278-296 (MTFIIVLAFIVCWTPFFFV). Residues 297-311 (QMWSVWDADAPKEAS) are Extracellular-facing. A helical membrane pass occupies residues 312 to 334 (AFIIAMLLASLNSCCNPWIYMLF). The Cytoplasmic portion of the chain corresponds to 335–386 (TGHLFHELVQRFLCCSSSHLKTSRPGETSVSKKSNSSTFVLSQHSSSQKSCS). Residues 355 to 375 (KTSRPGETSVSKKSNSSTFVL) show a composition bias toward polar residues. The disordered stretch occupies residues 355–386 (KTSRPGETSVSKKSNSSTFVLSQHSSSQKSCS). A phosphoserine mark is found at Ser368 and Ser370. Residues 376-386 (SQHSSSQKSCS) show a composition bias toward low complexity.

The protein belongs to the G-protein coupled receptor 1 family. Vasopressin/oxytocin receptor subfamily.

It is found in the cell membrane. Functionally, receptor for oxytocin. The activity of this receptor is mediated by G proteins which activate a phosphatidylinositol-calcium second messenger system. In Sus scrofa (Pig), this protein is Oxytocin receptor (OXTR).